The following is a 483-amino-acid chain: Betaine aldehyde dehydrogenase (483 aa).

K(+) is bound by residues isoleucine 27 and aspartate 93. An NAD(+)-binding site is contributed by 149-151 (GAW). Lysine 161 acts as the Charge relay system in catalysis. Residue 175-178 (KPSE) participates in NAD(+) binding. Valine 179 serves as a coordination point for K(+). 228 to 231 (SVPT) is a binding site for NAD(+). Valine 243 is a binding site for K(+). Residue glutamate 249 is the Proton acceptor of the active site. Positions 251, 283, and 380 each coordinate NAD(+). The Nucleophile role is filled by cysteine 283. The residue at position 283 (cysteine 283) is a Cysteine sulfenic acid (-SOH). K(+) is bound by residues lysine 450 and glycine 453. The active-site Charge relay system is glutamate 457.

It belongs to the aldehyde dehydrogenase family. Dimer of dimers. It depends on K(+) as a cofactor.

The catalysed reaction is betaine aldehyde + NAD(+) + H2O = glycine betaine + NADH + 2 H(+). It functions in the pathway amine and polyamine biosynthesis; betaine biosynthesis via choline pathway; betaine from betaine aldehyde: step 1/1. Its function is as follows. Involved in the biosynthesis of the osmoprotectant glycine betaine. Catalyzes the irreversible oxidation of betaine aldehyde to the corresponding acid. The protein is Betaine aldehyde dehydrogenase of Cereibacter sphaeroides (strain KD131 / KCTC 12085) (Rhodobacter sphaeroides).